The following is a 738-amino-acid chain: Eukaryotic translation initiation factor 3 subunit B (738 aa).

The span at 1 to 10 (MAPSFENLSE) shows a compositional bias: polar residues. A disordered region spans residues 1–20 (MAPSFENLSEQDLHEEEEEE). The region spanning 40–126 (TFVVIDGLPV…HTLLVNKLMD (87 aa)) is the RRM domain. WD repeat units lie at residues 193 to 230 (AHWT…KQKQ), 232 to 289 (PHPF…RSFV), 301 to 342 (QPKK…LLGK), 454 to 494 (SLKD…SFFA), 511 to 554 (IEKK…EKND), and 569 to 607 (VDHY…HTFS). The tract at residues 693–720 (EAYGLPEEADQPKAAKDAPTNTEDKGET) is disordered. Residues 702–720 (DQPKAAKDAPTNTEDKGET) are compositionally biased toward basic and acidic residues.

The protein belongs to the eIF-3 subunit B family. Component of the eukaryotic translation initiation factor 3 (eIF-3) complex.

It is found in the cytoplasm. RNA-binding component of the eukaryotic translation initiation factor 3 (eIF-3) complex, which is involved in protein synthesis of a specialized repertoire of mRNAs and, together with other initiation factors, stimulates binding of mRNA and methionyl-tRNAi to the 40S ribosome. The eIF-3 complex specifically targets and initiates translation of a subset of mRNAs involved in cell proliferation. In Emericella nidulans (strain FGSC A4 / ATCC 38163 / CBS 112.46 / NRRL 194 / M139) (Aspergillus nidulans), this protein is Eukaryotic translation initiation factor 3 subunit B (prt1).